A 474-amino-acid chain; its full sequence is Nucleobindin-1 (474 aa).

Residues 1–24 form the signal peptide; that stretch reads MPPSGPRAALFLLPSLLLLRAVLA. Residue S83 is modified to Phosphoserine. A Phosphothreonine modification is found at T145. Positions 147–215 form a coiled coil; sequence EARDLELLIQ…QQRRHREHPK (69 aa). Over residues 190-207 the composition is skewed to basic and acidic residues; that stretch reads SLGEEQRKEAERKLEEQQ. The segment at 190 to 218 is disordered; the sequence is SLGEEQRKEAERKLEEQQRRHREHPKVNV. The binds to GNAI2 and GNAI3 stretch occupies residues 225–318; that stretch reads LKEVWEELDG…VTLEEFLAST (94 aa). EF-hand domains lie at 237-272 and 289-324; these read PNRF…ELEK and ERLR…KEFG. Ca(2+) is bound by residues D250, N252, D254, E261, D302, N304, D306, and E313. The short motif at 300–330 is the GBA element; sequence NVDTNQDRLVTLEEFLASTQRKEFGDTGEGW. Positions 355 to 422 form a coiled coil; the sequence is AYTEEELRRF…RKQQQQSHNN (68 aa). The tract at residues 382–474 is disordered; it reads LSQETEALGR…EPPQLDSQHL (93 aa). S383 carries the phosphoserine modification. Residues 448 to 460 show a composition bias toward basic and acidic residues; the sequence is DQKDVDASEKKVP. Phosphoserine is present on S471.

Belongs to the nucleobindin family. In terms of assembly, interacts (via GBA motif) with guanine nucleotide-binding protein G(i) alpha subunits GNAI1, GNAI2 and GNAI3 with higher affinity for GNAI1 and GNAI3 than for GNAI2. Preferentially interacts with inactive rather than active GNAI3. Interaction with GNAI3 is inhibited when NUCB1 binds calcium, probably due to a conformational change which renders the GBA motif inaccessible. In terms of tissue distribution, expressed in bone where it is detected in the soft tissue in the center of the osteon and in the osteocyte lacuna (at protein level).

The protein localises to the golgi apparatus. Its subcellular location is the cis-Golgi network membrane. It localises to the cytoplasm. It is found in the secreted. Major calcium-binding protein of the Golgi which may have a role in calcium homeostasis. Acts as a non-receptor guanine nucleotide exchange factor which binds to and activates alpha subunits of guanine nucleotide-binding proteins (G proteins). The protein is Nucleobindin-1 (NUCB1) of Bos taurus (Bovine).